Consider the following 329-residue polypeptide: uncharacterized protein (329 aa).

Disordered regions lie at residues 16–41 and 183–229; these read RCGYPKAQEGTPAEGEQNSRKPSRIC and LENK…KFEP. Residues 213–229 show a composition bias toward basic and acidic residues; it reads SNDKANRGEKGEAKFEP.

As to expression, expressed in testis and epididymis. Expressed at lower levels in ovary.

In terms of biological role, dispensable for normal development and fertility. This is an uncharacterized protein from Mus musculus (Mouse).